A 135-amino-acid polypeptide reads, in one-letter code: uncharacterized protein (135 aa).

Residues 4–129 (SIVHIALVVN…YGNLWDLLQL (126 aa)) form the VOC domain.

To B.subtilis YwkD.

This is an uncharacterized protein from Shewanella frigidimarina (strain NCIMB 400).